The sequence spans 582 residues: MANQIDESKPISDLEIMRHSAAHIMAEAVLSMFPEAKLGIGPAIDTGFYYDFDLPRTLTPEDLPEIETRMNQLVKSNLPFRREEMSKDEARKLFANQPYKLELLNDITDETVSIYRQGNFCDLCRGPHVNYTSKVKAFKLLSIAGAYWRGDEKRPMLQRIYGAAFLDKASLAEYLNMLEEAAKRDHRKLGKELELFSLHQEIGGGLVNWLPNGAIVRHLIEEFWKKEHLKRGYDLVYTPHIAKVDLWKTSGHWGFYRENMYSPMDIDGEEYVLKPMNCVYHILMFKNRTRSYKELPIRMAELGTVYRYERSGVLHGLSRVRGFTQDDAHIFCLYDQLEKEVVKVLDLAKFMIDTFGFTKYKVMLSTRPEKYVGELDKWEYATDILAKALEANQIPYQVDPGEGVFYGPKIDIKFEDALGRTWQGPTIQVDFQLPERFDVSVVGEDGKDQPVAMVHRTVLGSMERFMSCLTEQYGGAFPAWLSPKQVMVIPIADRHTEFAEKLACELREEEVRVEVDSRSETMNQKIRQAQLAKIPYMLVVGDKEIETQSVAVRTRTGSQQVMPFAEFKSMLLAKIKTKSTEI.

Residues 185–478 are catalytic; it reads DHRKLGKELE…LTEQYGGAFP (294 aa). The Zn(2+) site is built by cysteine 278, histidine 329, and histidine 455.

The protein belongs to the class-II aminoacyl-tRNA synthetase family. Homodimer. Zn(2+) serves as cofactor.

The protein resides in the cytoplasm. It catalyses the reaction tRNA(Thr) + L-threonine + ATP = L-threonyl-tRNA(Thr) + AMP + diphosphate + H(+). Functionally, catalyzes the attachment of threonine to tRNA(Thr) in a two-step reaction: L-threonine is first activated by ATP to form Thr-AMP and then transferred to the acceptor end of tRNA(Thr). Also edits incorrectly charged L-seryl-tRNA(Thr). The protein is Threonine--tRNA ligase of Dehalococcoides mccartyi (strain CBDB1).